The sequence spans 156 residues: Arginine repressor (156 aa).

Belongs to the ArgR family.

The protein localises to the cytoplasm. It functions in the pathway amino-acid biosynthesis; L-arginine biosynthesis [regulation]. Its function is as follows. Regulates arginine biosynthesis genes. In Vibrio atlanticus (strain LGP32) (Vibrio splendidus (strain Mel32)), this protein is Arginine repressor.